Reading from the N-terminus, the 303-residue chain is Serine/threonine-protein phosphatase PP-X homolog 1 (303 aa).

Aspartate 51, histidine 53, aspartate 79, and asparagine 111 together coordinate Mn(2+). Histidine 112 serves as the catalytic Proton donor. 2 residues coordinate Mn(2+): histidine 161 and histidine 235.

The protein belongs to the PPP phosphatase family. PP-4 (PP-X) subfamily. It depends on Mn(2+) as a cofactor.

It carries out the reaction O-phospho-L-seryl-[protein] + H2O = L-seryl-[protein] + phosphate. It catalyses the reaction O-phospho-L-threonyl-[protein] + H2O = L-threonyl-[protein] + phosphate. The chain is Serine/threonine-protein phosphatase PP-X homolog 1 (Ppx1) from Paramecium tetraurelia.